The chain runs to 85 residues: Defensin-like protein 11 (85 aa).

An N-terminal signal peptide occupies residues 1 to 29 (MGKTISFSAIILVFLLVSTGLMKQGDAQA). 4 cysteine pairs are disulfide-bonded: cysteine 32–cysteine 84, cysteine 44–cysteine 68, cysteine 54–cysteine 75, and cysteine 58–cysteine 77.

This sequence belongs to the DEFL family.

The protein localises to the secreted. This chain is Defensin-like protein 11, found in Arabidopsis thaliana (Mouse-ear cress).